The sequence spans 1262 residues: Zinc finger protein 592 (1262 aa).

The interval 23-45 (SLDAKEAIQAPSEENESPLKSSG) is disordered. Residues Ser-78, Ser-142, Ser-145, and Ser-146 each carry the phosphoserine modification. Disordered regions lie at residues 122 to 174 (SFTS…PPPG), 200 to 278 (KKEP…AHSK), and 294 to 494 (VANV…ASTP). Glycyl lysine isopeptide (Lys-Gly) (interchain with G-Cter in SUMO2) cross-links involve residues Lys-200 and Lys-204. Composition is skewed to basic and acidic residues over residues 213-232 (QQEHEQGGQKVVEPHKDLDS) and 298-308 (TKEDQPGHTKD). Residues 343–367 (PSDSPRSICSDSSSKGSPSVAASSP) show a composition bias toward low complexity. Polar residues predominate over residues 454 to 463 (IKTSDSSSPC). The span at 484-494 (QQSTAPQASTP) shows a compositional bias: low complexity. Phosphoserine is present on Ser-529. Lys-546 participates in a covalent cross-link: Glycyl lysine isopeptide (Lys-Gly) (interchain with G-Cter in SUMO2). At Ser-573 the chain carries Phosphoserine. The C2H2-type 1; atypical zinc finger occupies 587-612 (YCCLECGDAFALEKSLSQHYSRRSVH). A C2H2-type 2; atypical zinc finger spans residues 615–639 (VLCTLCSKTLLFFNKCSLLRHARDH). Phosphoserine is present on Ser-691. The C2H2-type 3; degenerate zinc finger occupies 711-731 (TKCPECHKQMRDYMVLATHFQ). The segment at 740–764 (LTCQVCQMLLPNQCSFCAHQRIHAH) adopts a C2H2-type 4 zinc-finger fold. Residues 768-790 (YCCPECGVLCRSAYFQTHVKENC) form a C2H2-type 5; atypical zinc finger. 3 consecutive C2H2-type zinc fingers follow at residues 799-822 (YRCIHCGVIHLTLALLKSHIQERH), 827-850 (HKCAFCPMAFKTASSTMDHSTTQH), and 892-915 (FKCPECPLLFLQKPELMQHVKNTH). Over residues 924–935 (LSSLQSSTDTSS) the composition is skewed to low complexity. The segment at 924-979 (LSSLQSSTDTSSNRPGSRAPAEPPATNVAARGSSLTAGRWGRPEAHRRAEARPRMR) is disordered. Basic and acidic residues predominate over residues 964 to 976 (GRPEAHRRAEARP). 2 consecutive C2H2-type zinc fingers follow at residues 983 to 1006 (WTCQECQEWVPDRESYVSHMKKSH) and 1013 to 1036 (YPCRQCEQSFHNPSSLRKHIRNNH). Residues 1043–1069 (YTCGYCTEDSPSFPRPSLLESHISLMH) form a C2H2-type 11; atypical zinc finger. Ser-1089 carries the phosphoserine modification. The segment at 1124–1146 (FQCAKCTFATDSELEFQSHIPQH) adopts a C2H2-type 12; atypical zinc-finger fold. Residues 1153–1176 (AQCLLCGLCYTSTSSLNRHLFIVH) form a C2H2-type 13 zinc finger. 2 positions are modified to phosphoserine: Ser-1198 and Ser-1202. The interval 1222–1262 (PLVTDLGGQQGLALDEDSAQDPQNQPQASQDQNSHALSPQV) is disordered. Residues 1241 to 1262 (QDPQNQPQASQDQNSHALSPQV) are compositionally biased toward polar residues.

The protein belongs to the krueppel C2H2-type zinc-finger protein family. As to quaternary structure, interacts with ZMYND8. As to expression, expressed in the brain.

It is found in the nucleus. May be involved in transcriptional regulation. The sequence is that of Zinc finger protein 592 (Znf592) from Mus musculus (Mouse).